Consider the following 584-residue polypeptide: Cytochrome c oxidase subunit 1 (584 aa).

The interval 1-25 (MTAVAPRVDGHVAPQRPEPTGHARK) is disordered. The chain crosses the membrane as a helical span at residues 43–63 (IMYIIMSFSFFFLGGLMALLI). His-87 contacts Fe(II)-heme a. Transmembrane regions (helical) follow at residues 90–110 (VMLLLYGTPIVWGFANYVLPL), 122–142 (LNAFGFWITTVGGVAMLTGFL), 171–191 (MWIVGVGATGIGSVASAINML), 214–234 (IFVVSVLALLIFPLLLAAALG), 259–279 (LFWFFGHPEVYVLALPFFGIV), and 292–312 (FGYVGLIFATLSIGALSMAVW). Cu cation is bound by residues His-265 and Tyr-269. A cross-link (1'-histidyl-3'-tyrosine (His-Tyr)) is located at residues 265-269 (HPEVY). The Cu cation site is built by His-314 and His-315. A run of 2 helical transmembrane segments spans residues 316 to 336 (MFVTGAVLLPFFSFMTFLISV) and 360 to 380 (MIWSVGFMATFLFGGLTGIML). A heme a3-binding site is contributed by His-398. A run of 3 helical transmembrane segments spans residues 399–419 (FHYTLFGTVVFASCAGVYFWF), 434–454 (IHFWLTFVGFHGTFLIQHWVG), and 477–497 (ISTVFSFLLGLSVIPFIWNVF). His-400 serves as a coordination point for Fe(II)-heme a. The interval 564–584 (HDDINAPELGTAPALASDSSR) is disordered.

As to quaternary structure, associates with subunits II, III and IV to form cytochrome c oxidase. The 4 subunit cytochrome c oxidase forms a supercomplex with the menaquinol-cytochrome c reductase complex (cytochrome bc1). It depends on Cu(2+) as a cofactor. Requires heme as cofactor.

It is found in the cell membrane. The enzyme catalyses 4 Fe(II)-[cytochrome c] + O2 + 8 H(+)(in) = 4 Fe(III)-[cytochrome c] + 2 H2O + 4 H(+)(out). Its pathway is energy metabolism; oxidative phosphorylation. Cytochrome c oxidase is the component of the respiratory chain that catalyzes the reduction of oxygen to water. Subunits 1-3 form the functional core of the enzyme complex. CO I is the catalytic subunit of the enzyme. Electrons originating in cytochrome c are transferred via the copper A center of subunit 2 and heme A of subunit 1 to the bimetallic center formed by heme A3 and copper B. The protein is Cytochrome c oxidase subunit 1 (ctaD) of Corynebacterium glutamicum (strain ATCC 13032 / DSM 20300 / JCM 1318 / BCRC 11384 / CCUG 27702 / LMG 3730 / NBRC 12168 / NCIMB 10025 / NRRL B-2784 / 534).